Here is a 237-residue protein sequence, read N- to C-terminus: Probable transcriptional regulatory protein EAT1b_0153 (237 aa).

Belongs to the TACO1 family. YeeN subfamily.

The protein localises to the cytoplasm. The protein is Probable transcriptional regulatory protein EAT1b_0153 of Exiguobacterium sp. (strain ATCC BAA-1283 / AT1b).